Consider the following 150-residue polypeptide: MPAPADIQAATLNKFLAAWREGSAPDTMALWSDDFKQRLLPLSLGESSFRSRDQAALFYPGLVENLRNWELHIKEIVHDSARGTAAVYATSQADTPFSGEKWTNEYAIFLSFSEDGTKVCRLEEMMDSAFYQSFVPKFQRYLMGLGGLKK.

Belongs to the avfA family.

It participates in secondary metabolite biosynthesis. Its function is as follows. Monooxygenase; part of the gene cluster that mediates the biosynthesis of the tetrahydroxanthone dimer neosartorin, which exhibits antibacterial activity. The two different monomeric units appear to be synthesized by the same set of enzymes, among which the Baeyer-Villiger monooxygenase nsrF is the key enzyme for the divergence of the biosynthetic routes. The pathway begins with the synthesis of atrochrysone thioester by the polyketide synthase nsrB. The atrochrysone carboxyl ACP thioesterase nsrC then breaks the thioester bond and releases the atrochrysone carboxylic acid from AacuL. Atrochrysone carboxylic acid is decarboxylated by the decarboxylase nsrE, and oxidized by the anthrone oxygenase nsrD to yield emodin. Emodin is then reduced to emodin hydroquinone by the oxidoreductase nsrR. A-ring reduction by the short chain dehydrogenase nsrJ, dehydration by the scytalone dehydratase-like protein nsrI and probable spontaneous re-oxidation, results in overall deoxygenation to chrysophanol. The Baeyer-Villiger monooxygenase nsrF accepts chrysophanol as a substrate to insert one oxygen atom at two different positions to yield the precursors of both monomric units. NsrF is promiscuous/flexible in interacting with the 2 (non methylated and methylated) aromatic rings of chrysophanol, thus diverging the biosynthetic pathway at this point. After the hydrolysis of the lactones, methylesterification by the methyltransferase nsrG yields respectively moniliphenone and 2,2',6'-trihydroxy-4-methyl-6-methoxya-cyldiphenylmethanone. The next steps are the hydroxylation by the FAD-dependent monooxygenase nsrK, followed by isomerization by the monooxygenase nsrQ. The short chain dehydrogenase/reductase nsrO then catalyzes the C-5 ketoreduction to give the xanthone skeleton of blennolide C and 5-acetylblennolide A. The acetyltransferase nsrL has a strict substrate specificity and uses only blennolide A but not blennolide C to yield 5-acetylblennolide A as the single-acetylated product. In the final step of the biosynthesis, the heterodimerization of the 2 xanthones, blennolide C and 5-acetylblennolide A, is catalyzed by the cytochrome P450 monooxygenase nsrP. NsrP can utilize at least three different xanthones as its substrates to perform the dimerization reaction. The protein is Monooxygenase nsrS of Aspergillus novofumigatus (strain IBT 16806).